Reading from the N-terminus, the 263-residue chain is Endonuclease NucS (263 aa).

It belongs to the NucS endonuclease family.

It localises to the cytoplasm. Cleaves both 3' and 5' ssDNA extremities of branched DNA structures. The protein is Endonuclease NucS of Methanocaldococcus jannaschii (strain ATCC 43067 / DSM 2661 / JAL-1 / JCM 10045 / NBRC 100440) (Methanococcus jannaschii).